Consider the following 437-residue polypeptide: MSITKVHARTVYDSRGNPTVEVEITTENGLFRAIVPSGASTGIHEAVELRDGNKSEWMGKGVTKAVSNVNSIIGPALIKSELCVTNQKGIDELMISLDGTSNKSRLGANAILGVSLCVARAAAAQKGITLYKYIAELADARQDPFVIPVPFFNVLNGGAHAGGSLAMQEFKIAPVGAQSFAEAMRMGSEVYHHLKILAKEQYGPSAGNVGDEGGVAPDIDTAEDALDMIVEAINICGYEGRVKVGIDSAPSVFYKDGKYDLNFKEPNSDPSHWLSPAQLAEYYHSLLKKYPIISLEDPYAEDDWSSWSAFLKTVNVQIIADDLTCTNKTRIARAIEEKCANTLLLKLNQIGTLTESIEAANQAFDAGWGVMISHRSGETEDPFIADLVVGLRCGQIKSGALSRSERLAKYNELLRIEEELGDDCIYAGHRFHDGNKL.

2 residues coordinate substrate: histidine 160 and glutamate 169. The active-site Proton donor is the glutamate 212. Residues aspartate 247, glutamate 296, and aspartate 321 each coordinate Mg(2+). Substrate-binding residues include glutamate 296 and aspartate 321. Lysine 346 serves as the catalytic Proton acceptor. Residues 373 to 376 (SHRS) and lysine 397 each bind substrate.

It belongs to the enolase family. Mg(2+) is required as a cofactor.

It catalyses the reaction (2R)-2-phosphoglycerate = phosphoenolpyruvate + H2O. It functions in the pathway carbohydrate degradation; glycolysis; pyruvate from D-glyceraldehyde 3-phosphate: step 4/5. The sequence is that of Enolase-related protein 1 (ERR1) from Saccharomyces cerevisiae (strain ATCC 204508 / S288c) (Baker's yeast).